Reading from the N-terminus, the 230-residue chain is Sugar fermentation stimulation protein homolog (230 aa).

This sequence belongs to the SfsA family.

This Pelobacter propionicus (strain DSM 2379 / NBRC 103807 / OttBd1) protein is Sugar fermentation stimulation protein homolog.